Consider the following 117-residue polypeptide: Large ribosomal subunit protein uL18 (117 aa).

The protein belongs to the universal ribosomal protein uL18 family. As to quaternary structure, part of the 50S ribosomal subunit; part of the 5S rRNA/L5/L18/L25 subcomplex. Contacts the 5S and 23S rRNAs.

Functionally, this is one of the proteins that bind and probably mediate the attachment of the 5S RNA into the large ribosomal subunit, where it forms part of the central protuberance. The polypeptide is Large ribosomal subunit protein uL18 (Aliivibrio fischeri (strain ATCC 700601 / ES114) (Vibrio fischeri)).